Consider the following 215-residue polypeptide: MKYFLDTADVSEIRRLNRLGIVDGVTTNPTIISREGRDFKEVINEICQIVDGPVSAEVTGLTCDEMVTEAREIAKWSPNVVVKIPMTEEGLAAVSQLSKEGIKTNVTLIFTVAQGLSAMKAGATFISPFVGRLEDIGTDAYALIRDLRHIIDFYGFQSEIIAASIRGLAHVEGVAKCGAHIATIPDKTFASLFTHPLTDKGIETFLKDWDSFKKK.

Lysine 83 functions as the Schiff-base intermediate with substrate in the catalytic mechanism.

The protein belongs to the transaldolase family. Type 3B subfamily.

It is found in the cytoplasm. The catalysed reaction is D-sedoheptulose 7-phosphate + D-glyceraldehyde 3-phosphate = D-erythrose 4-phosphate + beta-D-fructose 6-phosphate. It functions in the pathway carbohydrate degradation; pentose phosphate pathway; D-glyceraldehyde 3-phosphate and beta-D-fructose 6-phosphate from D-ribose 5-phosphate and D-xylulose 5-phosphate (non-oxidative stage): step 2/3. Functionally, transaldolase is important for the balance of metabolites in the pentose-phosphate pathway. The polypeptide is Probable transaldolase (Streptococcus agalactiae serotype III (strain NEM316)).